The chain runs to 164 residues: MSGPALTHIDSAGEASMVDVGDKTETVRVAVAEGFVRMKPETLALIREGNAKKGDVIATARLAGIMAAKQTSSLIPLCHPLMLTKVSVEIAPDDALPGLRVEAMAKLTGRTGVEMEALTAVSVACLTIYDMAKAADRDMEIGGVRLVSKSGGRSGDYRREGDMR.

Substrate contacts are provided by residues 77–79 (LCH) and 115–116 (ME). Asp-130 is a catalytic residue.

This sequence belongs to the MoaC family. In terms of assembly, homohexamer; trimer of dimers.

The enzyme catalyses (8S)-3',8-cyclo-7,8-dihydroguanosine 5'-triphosphate = cyclic pyranopterin phosphate + diphosphate. The protein operates within cofactor biosynthesis; molybdopterin biosynthesis. In terms of biological role, catalyzes the conversion of (8S)-3',8-cyclo-7,8-dihydroguanosine 5'-triphosphate to cyclic pyranopterin monophosphate (cPMP). This is Cyclic pyranopterin monophosphate synthase from Sinorhizobium medicae (strain WSM419) (Ensifer medicae).